The chain runs to 337 residues: MLRETWLCVILVAFVSHPVWLQKPHKRKTQLKAAGCCEEMRELKAQVANLSSLLGELSRKQESDWVSVVMQVMELESSSKHMESRLSTAESKYSEMNNQIDIMQLQAAQTVTQTSADAIYDCSSLYQKNYRISGVYKLPPDEFLGSPELEVFCDMETSGGGWTIIQRRKSGLVSFYQDWRQYKQGFGSIRGDFWLGNEHIHRLTRQPSRLRVELEDWEGNARYAEYSYFALGNELNSYRLFLGNYSGNVGKDALLYHNNTVFSTKDKDNDNCLDKCAQLRKGGYWYNCCTDSNLNGVYYRLGEHRKHMDGISWYGWHGANYSLKRVEMKIRPEAFKP.

A signal peptide spans 1–21 (MLRETWLCVILVAFVSHPVWL). Residues 30–110 (QLKAAGCCEE…DIMQLQAAQT (81 aa)) adopt a coiled-coil conformation. Asn49 carries N-linked (GlcNAc...) asparagine glycosylation. The Fibrinogen C-terminal domain maps to 113–334 (QTSADAIYDC…RVEMKIRPEA (222 aa)). Residues Cys122 and Cys153 are joined by a disulfide bond. N-linked (GlcNAc...) asparagine glycans are attached at residues Asn244 and Asn258. A disulfide bridge connects residues Cys276 and Cys289. N-linked (GlcNAc...) asparagine glycosylation is present at Asn320.

Homotetramer; disulfide-linked.

The protein resides in the secreted. Its function is as follows. Has a role in the formation and organization of the extracellular matrix. In the eye, it functions as a mediator of dexamethasone-induced matrix deposition in the trabecular meshwork, the tissue responsible for the outflow of the ocular aqueous humor and for the maintenance of intraocular pressure. Is a negative regulator of angiogenesis in the cornea, and plays a major role in maintaining corneal avascularity and transparency. This is Angiopoietin-related protein 7 (Angptl7) from Mus musculus (Mouse).